A 916-amino-acid polypeptide reads, in one-letter code: MESGQPARRIAMAPLLEYERQLVLELLDTDGLVVCARGLGADRLLYHFLQLHCHPACLVLVLNTQPAEEEYFINQLKIEGVEHLPRRVTNEITSNSRYEVYTQGGVIFATSRILVVDFLTDRIPSDLITGILVYRAHRIIESCQEAFILRLFRQKNKRGFIKAFTDNAVAFDTGFCHVERVMRNLFVRKLYLWPRFHVAVNSFLEQHKPEVVEIHVSMTPTMLAIQTAILDILNACLKELKCHNPSLEVEDLSLENAIGKPFDKTIRHYLDPLWHQLGAKTKSLVQDLKILRTLLQYLSQYDCVTFLNLLESLRATEKAFGQNSGWLFLDSSTSMFINARARVYHLPDAKMSKKEKISEKMEIKEGEETKKELVLESNPKWEALTEVLKEIEAENKESEALGGPGQVLICASDDRTCSQLRDYITLGAEAFLLRLYRKTFEKDSKAEEVWMKFRKEDSSKRIRKSHKRPKDPQNKERASTKERTLKKKKRKLTLTQMVGKPEELEEEGDVEEGYRREISSSPESCPEEIKHEEFDVNLSSDAAFGILKEPLTIIHPLLGCSDPYALTRVLHEVEPRYVVLYDAELTFVRQLEIYRASRPGKPLRVYFLIYGGSTEEQRYLTALRKEKEAFEKLIREKASMVVPEEREGRDETNLDLVRGTASADVSTDTRKAGGQEQNGTQQSIVVDMREFRSELPSLIHRRGIDIEPVTLEVGDYILTPEMCVERKSISDLIGSLNNGRLYSQCISMSRYYKRPVLLIEFDPSKPFSLTSRGALFQEISSNDISSKLTLLTLHFPRLRILWCPSPHATAELFEELKQSKPQPDAATALAITADSETLPESEKYNPGPQDFLLKMPGVNAKNCRSLMHHVKNIAELAALSQDELTSILGNAANAKQLYDFIHTSFAEVVSKGKGKK.

The segment at 1 to 457 (MESGQPARRI…EVWMKFRKED (457 aa)) is helicase-like. Leucine-zipper stretches follow at residues 233-254 (LNAC…DLSL) and 270-298 (LDPL…LQYL). N6-acetyllysine is present on K289. Residues 460 to 487 (KRIRKSHKRPKDPQNKERASTKERTLKK) form a disordered region. Residues 470 to 483 (KDPQNKERASTKER) show a composition bias toward basic and acidic residues. Positions 486-491 (KKKKRK) match the Nuclear localization signal motif. K500 participates in a covalent cross-link: Glycyl lysine isopeptide (Lys-Gly) (interchain with G-Cter in SUMO2). Disordered regions lie at residues 502-526 (EELE…ESCP) and 660-679 (TASA…EQNG). Residue S521 is modified to Phosphoserine. Positions 658-813 (RGTASADVST…PSPHATAELF (156 aa)) are nuclease. Residues 683–763 (SIVVDMREFR…RPVLLIEFDP (81 aa)) enclose the ERCC4 domain. S764 is subject to Phosphoserine. The interval 837 to 905 (TLPESEKYNP…QLYDFIHTSF (69 aa)) is hhH2, dimerization with ERCC1. At K911 the chain carries N6-acetyllysine.

The protein belongs to the XPF family. In terms of assembly, heterodimer composed of ERCC1 and ERCC4/XPF. Interacts with SLX4/BTBD12; this interaction is direct and links the ERCC1-ERCC4/XPF complex to SLX4, which may coordinate the action of the structure-specific endonuclease during DNA repair. Requires Mg(2+) as cofactor. Acetylation at Lys-911 by KAT5 promotes interaction with ERCC1 by disrupting a salt bridge between Glu-907 and Lys-911, thereby exposing a second binding site for ERCC1. Deacetylated by SIRT1.

Its subcellular location is the nucleus. It localises to the chromosome. Catalytic component of a structure-specific DNA repair endonuclease responsible for the 5-prime incision during DNA repair, and which is essential for nucleotide excision repair (NER) and interstrand cross-link (ICL) repair. The chain is DNA repair endonuclease XPF from Homo sapiens (Human).